We begin with the raw amino-acid sequence, 364 residues long: Heat-inducible transcription repressor HrcA (364 aa).

The protein belongs to the HrcA family.

Negative regulator of class I heat shock genes (grpE-dnaK-dnaJ and groELS operons). Prevents heat-shock induction of these operons. This is Heat-inducible transcription repressor HrcA from Cyanothece sp. (strain PCC 7425 / ATCC 29141).